We begin with the raw amino-acid sequence, 229 residues long: Large ribosomal subunit protein uL1 (229 aa).

Belongs to the universal ribosomal protein uL1 family. Part of the 50S ribosomal subunit.

Functionally, binds directly to 23S rRNA. The L1 stalk is quite mobile in the ribosome, and is involved in E site tRNA release. In terms of biological role, protein L1 is also a translational repressor protein, it controls the translation of the L11 operon by binding to its mRNA. The sequence is that of Large ribosomal subunit protein uL1 from Clostridium botulinum (strain Alaska E43 / Type E3).